We begin with the raw amino-acid sequence, 622 residues long: MSTEHKQYLSAVTLAAIGVVYGDIGTSPLYTLRECFSGHYGFDVRPDVVFGFLSLIFWMLILVVSVKYLTYVMRADNAGEGGILTLMSLAGRNTSSRATSILVVLGLIGGSFFYGEVVITPAISVMSAIEGLEIAAPALDPYIVPCSIAVLTLLFVIQKHGTGSVGKLFAPVMLVWFLTLALLGLRSIIANPEVLAALNPKWAISFFVEYKSVSFFALGAVVLAITGVEALYADMGHFGKFPIRLAWFTVVLPSLVLNYFGQGALLLKNPEAIKNPFFLLAPDWALIPLLILATLATVIASQAVISGVFSLTRQAVRLGYLPPMRIIHTSEMESGQIYIPVINWTLYLAVVLVIIGFERSSNLAAAYGIAVTGTMVITSILFCTVAWKNWHWNRFLVVFLLMVLLIIDIPMFSANVLKLFSGGWLPLSLGLVMFIIMTTWKSERFSLLRRMHEHSNSLEAMIASLEKSPPVRVPGTAVYMSRAMNVIPFALLHNLKHNKVLHERVVLLTMRTDDVPYVHNVERVTIEQLSPTFWRVVARYGWRETPNVAEIFHRCGLEGLSCQMMETSFFMSHESLILTKRPWHLFLRGKLFIALSRNALRAPDQFEIPPNRVIELGTQVEI.

12 helical membrane-spanning segments follow: residues leucine 9–leucine 29, proline 46–valine 66, isoleucine 101–proline 121, proline 137–isoleucine 157, valine 165–leucine 185, valine 213–alanine 233, tryptophan 247–leucine 267, proline 276–alanine 296, isoleucine 337–phenylalanine 357, leucine 363–cysteine 383, phenylalanine 395–asparagine 415, and valine 416–isoleucine 436.

The protein belongs to the HAK/KUP transporter (TC 2.A.72) family.

It localises to the cell inner membrane. It catalyses the reaction K(+)(in) + H(+)(in) = K(+)(out) + H(+)(out). Its function is as follows. Responsible for the low-affinity transport of potassium into the cell. Likely operates as a K(+):H(+) symporter. The protein is Low affinity potassium transport system protein Kup of Yersinia pestis bv. Antiqua (strain Antiqua).